A 45-amino-acid chain; its full sequence is Gene 78 protein (45 aa).

Positions 1-14 (MKKMSDQLKARLEL) are enriched in basic and acidic residues. Residues 1–45 (MKKMSDQLKARLELRLSNAAQPHRNRKREMKRPGKGNRNNWKKEY) are disordered. A compositionally biased stretch (basic residues) spans 23-35 (HRNRKREMKRPGK).

The polypeptide is Gene 78 protein (78) (Mycobacterium phage L5 (Mycobacteriophage L5)).